We begin with the raw amino-acid sequence, 193 residues long: Putative manganese efflux pump MntP (193 aa).

6 consecutive transmembrane segments (helical) span residues 8–28, 37–57, 61–81, 109–129, 138–158, and 172–192; these read LLAI…GIIL, LVMA…GWMF, FSHL…AFLG, MAIA…LLGI, PILI…YFGI, and LWGG…HLFL.

Belongs to the MntP (TC 9.B.29) family.

The protein resides in the cell inner membrane. Its function is as follows. Probably functions as a manganese efflux pump. In Bacteroides thetaiotaomicron (strain ATCC 29148 / DSM 2079 / JCM 5827 / CCUG 10774 / NCTC 10582 / VPI-5482 / E50), this protein is Putative manganese efflux pump MntP.